Reading from the N-terminus, the 522-residue chain is MSSRPLESPPPYRPDEFKPNHYAPSNDIYGGEMHVRPMLSQPAYSFYPEDEILHFYKWTSPPGVIRILSMLIIVMCIAIFACVASTLAWDRGYGTSLLGGSVGYPYGGSGFGSYGSGYGYGYGYGYGYGGYTDPRAAKGFMLAMAAFCFIAALVIFVTSVIRSEMSRTRRYYLSVIIVSAILGIMVFIATIVYIMGVNPTAQSSGSLYGSQIYALCNQFYTPAATGLYVDQYLYHYCVVDPQEAIAIVLGFMIIVAFALIIFFAVKTRRKMDRYDKSNILWDKEHIYDEQPPNVEEWVKNVSAGTQDVPSPPSDYVERVDSPMAYSSNGKVNDKRFYPESSYKSTPVPEVVQELPLTSPVDDFRQPRYSSGGNFETPSKRAPAKGRAGRSKRTEQDHYETDYTTGGESCDELEEDWIREYPPITSDQQRQLYKRNFDTGLQEYKSLQSELDEINKELSRLDKELDDYREESEEYMAAADEYNRLKQVKGSADYKSKKNHCKQLKSKLSHIKKMVGDYDRQKT.

The disordered stretch occupies residues 1-20 (MSSRPLESPPPYRPDEFKPN). The Cytoplasmic portion of the chain corresponds to 1–66 (MSSRPLESPP…KWTSPPGVIR (66 aa)). The MARVEL domain maps to 60 to 269 (SPPGVIRILS…IIFFAVKTRR (210 aa)). Residues 67 to 89 (ILSMLIIVMCIAIFACVASTLAW) traverse the membrane as a helical segment. The Extracellular portion of the chain corresponds to 90–135 (DRGYGTSLLGGSVGYPYGGSGFGSYGSGYGYGYGYGYGYGGYTDPR). The chain crosses the membrane as a helical span at residues 136-160 (AAKGFMLAMAAFCFIAALVIFVTSV). At 161-170 (IRSEMSRTRR) the chain is on the cytoplasmic side. The helical transmembrane segment at 171–195 (YYLSVIIVSAILGIMVFIATIVYIM) threads the bilayer. Over 196–243 (GVNPTAQSSGSLYGSQIYALCNQFYTPAATGLYVDQYLYHYCVVDPQE) the chain is Extracellular. A disulfide bond links cysteine 216 and cysteine 237. A helical membrane pass occupies residues 244–265 (AIAIVLGFMIIVAFALIIFFAV). Residues 266-522 (KTRRKMDRYD…MVGDYDRQKT (257 aa)) are Cytoplasmic-facing. The residue at position 302 (serine 302) is a Phosphoserine. Threonine 305 is subject to Phosphothreonine. Phosphoserine is present on residues serine 313, serine 321, and serine 340. The tract at residues 360–407 (VDDFRQPRYSSGGNFETPSKRAPAKGRAGRSKRTEQDHYETDYTTGGE) is disordered. A compositionally biased stretch (polar residues) spans 367-376 (RYSSGGNFET). The residue at position 368 (tyrosine 368) is a Phosphotyrosine. A phosphoserine mark is found at serine 369 and serine 370. Basic residues predominate over residues 381 to 390 (APAKGRAGRS). A compositionally biased stretch (basic and acidic residues) spans 391–400 (KRTEQDHYET). Residues tyrosine 398 and tyrosine 402 each carry the phosphotyrosine modification. Residues threonine 403 and threonine 404 each carry the phosphothreonine; by PKC/PRKCH modification. Serine 408 is modified (phosphoserine). An OCEL domain is found at 414–522 (EDWIREYPPI…MVGDYDRQKT (109 aa)). Residues 426 to 489 (DQQRQLYKRN…EYNRLKQVKG (64 aa)) adopt a coiled-coil conformation. Serine 490 carries the post-translational modification Phosphoserine.

The protein belongs to the ELL/occludin family. Interacts with TJP1/ZO1. Interacts with VAPA. Interacts with CLDN1, CLDN6, CLDN9, CLDN11, CLDN12 and CLDN17. Interacts with PLSCR1. Interacts with LSR, ILDR1 and ILDR2. Interacts with TJP2/ZO2. Post-translationally, dephosphorylated by PTPRJ. The tyrosine phosphorylation on Tyr-398 and Tyr-402 reduces its ability to interact with TJP1. Phosphorylation at Ser-490 also attenuates the interaction with TJP1. In terms of processing, (Microbial infection) Cleaved by S.pyogenes SpeB protease; leading to its degradation. Degradation by SpeB promotes bacterial translocation across the host epithelial barrier. As to expression, localized at tight junctions of both epithelial and endothelial cells. Highly expressed in kidney. Not detected in testis.

Its subcellular location is the cell membrane. It localises to the cell junction. The protein resides in the tight junction. In terms of biological role, may play a role in the formation and regulation of the tight junction (TJ) paracellular permeability barrier. It is able to induce adhesion when expressed in cells lacking tight junctions. Functionally, (Microbial infection) Acts as a coreceptor for hepatitis C virus (HCV) in hepatocytes. This Homo sapiens (Human) protein is Occludin (OCLN).